The sequence spans 324 residues: Stomatin-like protein stl-1 (324 aa).

This sequence belongs to the band 7/mec-2 family. As to expression, widely expressed in most tissues, including body wall muscles, intestinal epithelia, and pharynx and head neurons.

It localises to the mitochondrion. Mitochondrial protein that probably regulates the biogenesis and the activity of mitochondria. In neurons, involved in mitochondrial fusion and recovery of normal locomotory behavior during reoxygenation; probably acts independently of egl-9 and the canonical hypoxia response pathway. This chain is Stomatin-like protein stl-1, found in Caenorhabditis elegans.